A 421-amino-acid polypeptide reads, in one-letter code: D-amino acid dehydrogenase (421 aa).

3–17 (VTILGAGVIGVTSAY) lines the FAD pocket.

The protein belongs to the DadA oxidoreductase family. It depends on FAD as a cofactor.

The catalysed reaction is a D-alpha-amino acid + A + H2O = a 2-oxocarboxylate + AH2 + NH4(+). It functions in the pathway amino-acid degradation; D-alanine degradation; NH(3) and pyruvate from D-alanine: step 1/1. In terms of biological role, oxidative deamination of D-amino acids. The chain is D-amino acid dehydrogenase from Allorhizobium ampelinum (strain ATCC BAA-846 / DSM 112012 / S4) (Agrobacterium vitis (strain S4)).